The primary structure comprises 718 residues: Effector protein hopM1 (718 aa).

The segment covering 1–10 (MIGTRVGGSG) has biased composition (gly residues). Disordered regions lie at residues 1-63 (MIGT…ARLP) and 683-718 (GVSS…GRRR). Positions 11-22 (STEIVQANQPQP) are enriched in polar residues. Residues 44–60 (ASQSAAQAPESSAAGAA) are compositionally biased toward low complexity.

In terms of assembly, interacts with the chaperone ShcM.

It is found in the secreted. The protein localises to the host membrane. Functionally, involved in the suppression of basal resistance and promotion of disease symptoms in plants. May be involved in the inhibition of a host vesicle trafficking pathway. The protein is Effector protein hopM1 (hopM1) of Pseudomonas syringae pv. syringae (strain B728a).